The primary structure comprises 447 residues: Multicopper oxidase mco (447 aa).

Residues 1 to 25 are compositionally biased toward basic and acidic residues; the sequence is MMDMKENDQKRNDMMDMKSHDERKN. Residues 1 to 43 form a disordered region; it reads MMDMKENDQKRNDMMDMKSHDERKNLNSSQGKNEITFPKVLDP. 12 residues coordinate Cu cation: histidine 107, histidine 109, histidine 147, histidine 149, histidine 375, histidine 378, histidine 380, histidine 428, cysteine 429, histidine 430, histidine 434, and methionine 439.

The protein belongs to the multicopper oxidase family. Requires Cu cation as cofactor.

It is found in the cytoplasm. May be involved in copper homeostasis and oxidative stress response. Oxidizes the substrate 3,3'-dimethoxybenzidine in vitro. Also possesses low levels of phenoloxidase and ferroxidase activities. The chain is Multicopper oxidase mco (mco) from Staphylococcus aureus.